A 49-amino-acid chain; its full sequence is DNA-directed RNA polymerase subunit Rpo12 (49 aa).

The Zn(2+) site is built by C11, C27, and C30.

It belongs to the archaeal Rpo12/eukaryotic RPC10 RNA polymerase subunit family. In terms of assembly, part of the RNA polymerase complex. The cofactor is Zn(2+).

It localises to the cytoplasm. The catalysed reaction is RNA(n) + a ribonucleoside 5'-triphosphate = RNA(n+1) + diphosphate. Functionally, DNA-dependent RNA polymerase (RNAP) catalyzes the transcription of DNA into RNA using the four ribonucleoside triphosphates as substrates. The sequence is that of DNA-directed RNA polymerase subunit Rpo12 from Pyrococcus furiosus (strain ATCC 43587 / DSM 3638 / JCM 8422 / Vc1).